Here is a 63-residue protein sequence, read N- to C-terminus: Bowman-Birk type proteinase inhibitor B-II (63 aa).

Disulfide bonds link cysteine 5-cysteine 62, cysteine 6-cysteine 23, cysteine 9-cysteine 57, cysteine 11-cysteine 21, cysteine 30-cysteine 37, cysteine 34-cysteine 49, and cysteine 39-cysteine 47.

Belongs to the Bowman-Birk serine protease inhibitor family.

In Arachis hypogaea (Peanut), this protein is Bowman-Birk type proteinase inhibitor B-II.